Here is a 438-residue protein sequence, read N- to C-terminus: MLSAFISSLRTVDLRRKILFTLGILVLYRVSAALPSPGVNYRHVQQCIQEATAGEAGEIYSLINLFSGGALLKLTVGVMPYITASIIVQLLTVVIPRFEELRKEGQAGQAKMTQYTRYLAIALAVLQATSIVALAANGGLLQGCQEDIISDQSIFSLVVIVLVMTGGAALVMWMGELITERGIGNGMSLLIFVGIAARIPAEGKQILDSRGGVIFAAVCLAALVIIVGVVFVEQGQRRIPVQYAKRMVGRRMYGGTSTYLPLKVNQAGVIPVIFASSLIYIPHLITQLVRSGSGGVGKSWWDKFVGTYLSDPADPVYINIYFGLIIFFTYFYVSVTFNPDERADEMKKFGGFIPGIRPGRPTADYLRYVLSRITLPGSIYLGAIAVLPNLFLQIGNGGEVQNLPFGGTAVLIMIGVGLDTVKQIESQLMQRNYEGFLK.

10 helical membrane passes run 18-38 (ILFTLGILVLYRVSAALPSPG), 76-96 (VGVMPYITASIIVQLLTVVIP), 121-141 (IALAVLQATSIVALAANGGLL), 154-174 (IFSLVVIVLVMTGGAALVMWM), 177-197 (LITERGIGNGMSLLIFVGIAA), 212-232 (GVIFAAVCLAALVIIVGVVFV), 269-289 (VIPVIFASSLIYIPHLITQLV), 315-335 (PVYINIYFGLIIFFTYFYVSV), 375-395 (LPGSIYLGAIAVLPNLFLQIG), and 398-418 (GEVQNLPFGGTAVLIMIGVGL).

The protein belongs to the SecY/SEC61-alpha family. As to quaternary structure, component of the Sec protein translocase complex. Heterotrimer consisting of SecY, SecE and SecG subunits. The heterotrimers can form oligomers, although 1 heterotrimer is thought to be able to translocate proteins. Interacts with the ribosome. Interacts with SecDF, and other proteins may be involved. Interacts with SecA.

It is found in the cell membrane. Its function is as follows. The central subunit of the protein translocation channel SecYEG. Consists of two halves formed by TMs 1-5 and 6-10. These two domains form a lateral gate at the front which open onto the bilayer between TMs 2 and 7, and are clamped together by SecE at the back. The channel is closed by both a pore ring composed of hydrophobic SecY resides and a short helix (helix 2A) on the extracellular side of the membrane which forms a plug. The plug probably moves laterally to allow the channel to open. The ring and the pore may move independently. The protein is Protein translocase subunit SecY of Mycobacterium leprae (strain TN).